A 318-amino-acid chain; its full sequence is MDSTYCFSHKHIFGIEQMSTEDIVHILDTAQSFKEISERSIKKVPTLRGKTVVNLFLEPSTRTRLSFEVAGKRLSADTFNISGSTSSTTKGETLVDTARNIEAMRPDAIVLRHSSSGAAQILAKHIDASIINAGDGTHEHPSQALLDMMTVRDNFGSIKGLIITIIGDIAHSRVALSDIIGFTKMGATVRLAGPATFIPMGIEAMGVEVYSSVAEAVQDANVVMALRIQKERQNDPLIPSLREYSICYGVNKKLLERAADDVIIMHPGPVNRGVELNPDVADGKGSVILDQVTNGVAVRMALLYLVAGGNRNGEEQGV.

The carbamoyl phosphate site is built by R62 and T63. K90 lines the L-aspartate pocket. Residues R112, H140, and Q143 each coordinate carbamoyl phosphate. L-aspartate-binding residues include R173 and R227. Carbamoyl phosphate is bound by residues G268 and P269.

It belongs to the aspartate/ornithine carbamoyltransferase superfamily. ATCase family. In terms of assembly, heterododecamer (2C3:3R2) of six catalytic PyrB chains organized as two trimers (C3), and six regulatory PyrI chains organized as three dimers (R2).

It carries out the reaction carbamoyl phosphate + L-aspartate = N-carbamoyl-L-aspartate + phosphate + H(+). The protein operates within pyrimidine metabolism; UMP biosynthesis via de novo pathway; (S)-dihydroorotate from bicarbonate: step 2/3. Its function is as follows. Catalyzes the condensation of carbamoyl phosphate and aspartate to form carbamoyl aspartate and inorganic phosphate, the committed step in the de novo pyrimidine nucleotide biosynthesis pathway. The protein is Aspartate carbamoyltransferase catalytic subunit of Desulfotalea psychrophila (strain LSv54 / DSM 12343).